The primary structure comprises 427 residues: Enolase (427 aa).

Position 163 (Gln-163) interacts with (2R)-2-phosphoglycerate. The Proton donor role is filled by Glu-205. Residues Asp-242, Glu-285, and Asp-312 each contribute to the Mg(2+) site. The (2R)-2-phosphoglycerate site is built by Lys-337, Arg-366, Ser-367, and Lys-388. The Proton acceptor role is filled by Lys-337.

Belongs to the enolase family. Requires Mg(2+) as cofactor.

It is found in the cytoplasm. The protein localises to the secreted. Its subcellular location is the cell surface. The enzyme catalyses (2R)-2-phosphoglycerate = phosphoenolpyruvate + H2O. It functions in the pathway carbohydrate degradation; glycolysis; pyruvate from D-glyceraldehyde 3-phosphate: step 4/5. Functionally, catalyzes the reversible conversion of 2-phosphoglycerate (2-PG) into phosphoenolpyruvate (PEP). It is essential for the degradation of carbohydrates via glycolysis. This is Enolase from Burkholderia ambifaria (strain MC40-6).